The sequence spans 338 residues: L-serine dehydratase (338 aa).

The residue at position 39 (Lys-39) is an N6-(pyridoxal phosphate)lysine.

This sequence belongs to the serine/threonine dehydratase family. Pyridoxal 5'-phosphate is required as a cofactor.

Its subcellular location is the cytoplasm. It catalyses the reaction L-serine = pyruvate + NH4(+). It functions in the pathway carbohydrate biosynthesis; gluconeogenesis. The polypeptide is L-serine dehydratase (SDL1) (Saccharomyces cerevisiae (strain RM11-1a) (Baker's yeast)).